A 575-amino-acid polypeptide reads, in one-letter code: Proline--tRNA ligase (575 aa).

It belongs to the class-II aminoacyl-tRNA synthetase family. ProS type 1 subfamily. In terms of assembly, homodimer.

Its subcellular location is the cytoplasm. The enzyme catalyses tRNA(Pro) + L-proline + ATP = L-prolyl-tRNA(Pro) + AMP + diphosphate. Its function is as follows. Catalyzes the attachment of proline to tRNA(Pro) in a two-step reaction: proline is first activated by ATP to form Pro-AMP and then transferred to the acceptor end of tRNA(Pro). As ProRS can inadvertently accommodate and process non-cognate amino acids such as alanine and cysteine, to avoid such errors it has two additional distinct editing activities against alanine. One activity is designated as 'pretransfer' editing and involves the tRNA(Pro)-independent hydrolysis of activated Ala-AMP. The other activity is designated 'posttransfer' editing and involves deacylation of mischarged Ala-tRNA(Pro). The misacylated Cys-tRNA(Pro) is not edited by ProRS. The chain is Proline--tRNA ligase from Saccharophagus degradans (strain 2-40 / ATCC 43961 / DSM 17024).